The chain runs to 309 residues: SUR7 family protein FMP45 (309 aa).

The Cytoplasmic portion of the chain corresponds to 1 to 5 (MIFKR). A helical transmembrane segment spans residues 6 to 26 (FVNLLVFLFLLGAGLLTFFLI). Residues 27 to 116 (LSGGRESGTL…YYLSRVGWAM (90 aa)) are Extracellular-facing. Residue N73 is glycosylated (N-linked (GlcNAc...) asparagine). Residues 117–137 (LLISLFFIVLALVPGFLATFL) form a helical membrane-spanning segment. Over 138–140 (PFK) the chain is Cytoplasmic. The chain crosses the membrane as a helical span at residues 141-161 (AVPVLYCVLSWLAFFFIILAA). Topologically, residues 162 to 188 (CLYTGCYVKARKTFRNSGRSARLGPKN) are extracellular. Residues 189-209 (FAFIWTSVFLMLVNAIWSTIF) traverse the membrane as a helical segment. The Cytoplasmic portion of the chain corresponds to 210 to 309 (SATHKAHSTY…GLAGPVTVRD (100 aa)). 2 positions are modified to phosphoserine: S230 and S232. T235 carries the phosphothreonine modification. Residues 253 to 309 (GPITAAPVVGQPQPTTTTTPAGNGKFFQKLKTRKQVPSAELEPAGDGGLAGPVTVRD) form a disordered region. Residues 258 to 274 (APVVGQPQPTTTTTPAG) are compositionally biased toward low complexity.

Belongs to the SUR7 family.

The protein resides in the cell membrane. In terms of biological role, involved in sporulation and affects the sphingolipid composition of the plasma membrane. The polypeptide is SUR7 family protein FMP45 (FMP45) (Saccharomyces cerevisiae (strain ATCC 204508 / S288c) (Baker's yeast)).